The chain runs to 175 residues: NADH dehydrogenase [ubiquinone] iron-sulfur protein 4, mitochondrial (175 aa).

The N-terminal 42 residues, 1–42, are a transit peptide targeting the mitochondrion; the sequence is MAAVSMSVVLRQTLWRRRAVAVAALSVSRVPTRSLRTSTWRL. Residues 149–175 form a disordered region; the sequence is ERKVPKPKSKSYGANFSWNKRTRVSTK.

This sequence belongs to the complex I NDUFS4 subunit family. In terms of assembly, mammalian complex I is composed of 45 different subunits. This is a component of the iron-sulfur (IP) fragment of the enzyme. Interacts with BCAP31 and TOMM40; the interaction mediates its translocation to the mitochondria; the interaction with BCAP31 is direct.

It is found in the mitochondrion inner membrane. Functionally, accessory subunit of the mitochondrial membrane respiratory chain NADH dehydrogenase (Complex I), that is believed not to be involved in catalysis. Complex I functions in the transfer of electrons from NADH to the respiratory chain. The immediate electron acceptor for the enzyme is believed to be ubiquinone. The sequence is that of NADH dehydrogenase [ubiquinone] iron-sulfur protein 4, mitochondrial (NDUFS4) from Pan troglodytes (Chimpanzee).